The following is a 462-amino-acid chain: Histidine--tRNA ligase (462 aa).

The protein belongs to the class-II aminoacyl-tRNA synthetase family. Homodimer.

The protein localises to the cytoplasm. It catalyses the reaction tRNA(His) + L-histidine + ATP = L-histidyl-tRNA(His) + AMP + diphosphate + H(+). The chain is Histidine--tRNA ligase from Trichormus variabilis (strain ATCC 29413 / PCC 7937) (Anabaena variabilis).